Consider the following 850-residue polypeptide: Pre-mRNA-splicing factor SYF1 (850 aa).

HAT repeat units lie at residues Gly10–Ser42, Cys46–Gln78, Ser90–Glu122, Tyr126–Asp160, Gly208–Asn247, Ala408–Ser442, Asn444–Lys480, Gly500–Ser531, Asn574–Lys609, Leu612–Gln653, Asn708–Glu744, and Met746–Asn782.

Belongs to the crooked-neck family. In terms of assembly, associated with the spliceosome.

The protein resides in the nucleus. In terms of biological role, involved in pre-mRNA splicing and cell cycle progression. This Debaryomyces hansenii (strain ATCC 36239 / CBS 767 / BCRC 21394 / JCM 1990 / NBRC 0083 / IGC 2968) (Yeast) protein is Pre-mRNA-splicing factor SYF1 (SYF1).